The primary structure comprises 171 residues: Transcriptional repressor NrdR (171 aa).

The span at 1-10 (MQCPHCHHNG) shows a compositional bias: basic residues. The segment at 1–21 (MQCPHCHHNGSRVVDSRPTDD) is disordered. Residues 3 to 34 (CPHCHHNGSRVVDSRPTDDGRVIRRRRECENC) fold into a zinc finger. Residues 49–139 (LLVIKKNGAR…VYRQFKDMHV (91 aa)) enclose the ATP-cone domain. Positions 152–171 (KVKLAKPSAKTTHAPKRKKD) are disordered.

Belongs to the NrdR family. Zn(2+) is required as a cofactor.

Functionally, negatively regulates transcription of bacterial ribonucleotide reductase nrd genes and operons by binding to NrdR-boxes. The sequence is that of Transcriptional repressor NrdR from Lactiplantibacillus plantarum (strain ATCC BAA-793 / NCIMB 8826 / WCFS1) (Lactobacillus plantarum).